A 456-amino-acid chain; its full sequence is Chordin-like protein 1 (456 aa).

The first 27 residues, 1–27 (MRKKWKMGGMKYIFSLLFFLLLEGGKT), serve as a signal peptide directing secretion. VWFC domains lie at 35–100 (TYCM…PRCP) and 113–179 (KSCE…RVCR). The N-linked (GlcNAc...) asparagine glycan is linked to N118. Positions 179–181 (RGD) match the Cell attachment site motif. The tract at residues 202–223 (ARHSYHRSHYDPPPSRQAGGLS) is disordered. One can recognise a VWFC 3 domain in the interval 258–323 (QVCVSNGKTY…IDGKCCKVCP (66 aa)). An N-linked (GlcNAc...) asparagine glycan is attached at N291.

In terms of tissue distribution, expressed in the developing cornea and in the eye anterior segment in addition to the retina. Differentially expressed in the fetal brain. There is high expression in cerebellum and neocortex. Expressed in retinal pericytes.

Its subcellular location is the secreted. Its function is as follows. Antagonizes the function of BMP4 by binding to it and preventing its interaction with receptors. Alters the fate commitment of neural stem cells from gliogenesis to neurogenesis. Contributes to neuronal differentiation of neural stem cells in the brain by preventing the adoption of a glial fate. May play a crucial role in dorsoventral axis formation. May play a role in embryonic bone formation. May also play an important role in regulating retinal angiogenesis through modulation of BMP4 actions in endothelial cells. Plays a role during anterior segment eye development. This is Chordin-like protein 1 (CHRDL1) from Homo sapiens (Human).